The chain runs to 510 residues: NAD(P)H-quinone oxidoreductase subunit 2 A, chloroplastic (510 aa).

Transmembrane regions (helical) follow at residues 31–51, 57–77, 99–119, 124–144, 149–169, 183–203, 229–249, 295–315, 323–343, 354–374, 395–415, 418–438, and 484–504; these read FIFP…IDLT, TPWL…ALLF, IFQF…VEYI, MAIT…MFLC, LITI…LSGY, YLLM…WLYG, ISIA…PAPF, WHLL…LIAI, MLAY…IVGD, YMLF…LFGL, ALSS…AGFF, LYLF…IGLL, and MIVC…IIAI.

Belongs to the complex I subunit 2 family. As to quaternary structure, NDH is composed of at least 16 different subunits, 5 of which are encoded in the nucleus.

The protein resides in the plastid. It is found in the chloroplast thylakoid membrane. The enzyme catalyses a plastoquinone + NADH + (n+1) H(+)(in) = a plastoquinol + NAD(+) + n H(+)(out). It carries out the reaction a plastoquinone + NADPH + (n+1) H(+)(in) = a plastoquinol + NADP(+) + n H(+)(out). NDH shuttles electrons from NAD(P)H:plastoquinone, via FMN and iron-sulfur (Fe-S) centers, to quinones in the photosynthetic chain and possibly in a chloroplast respiratory chain. The immediate electron acceptor for the enzyme in this species is believed to be plastoquinone. Couples the redox reaction to proton translocation, and thus conserves the redox energy in a proton gradient. This chain is NAD(P)H-quinone oxidoreductase subunit 2 A, chloroplastic, found in Nymphaea alba (White water-lily).